Here is a 910-residue protein sequence, read N- to C-terminus: DNA mismatch repair protein MutS (910 aa).

Residue 607–614 participates in ATP binding; sequence GPNMAGKS.

The protein belongs to the DNA mismatch repair MutS family.

In terms of biological role, this protein is involved in the repair of mismatches in DNA. It is possible that it carries out the mismatch recognition step. This protein has a weak ATPase activity. The chain is DNA mismatch repair protein MutS from Geobacillus thermodenitrificans (strain NG80-2).